A 534-amino-acid polypeptide reads, in one-letter code: Cyclin-L1 (534 aa).

Cyclin-like regions lie at residues 94-196 and 209-293; these read ELIQ…RVLK and KIIV…KILQ. Residues 327-534 are disordered; that stretch reads LPEGAPVLDN…DHPGHSRHRR (208 aa). Residues 389-399 show a composition bias toward basic and acidic residues; it reads KGRESRSRSGS. Low complexity-rich tracts occupy residues 400 to 412 and 437 to 453; these read RDQS…SRSA and RSGS…TYKS. Residues 400 to 436 form an RS region; it reads RDQSYSRSPSRSASPKHRKSESYSTSSGSKSHSRSRS. Residues 468–485 are compositionally biased toward basic residues; sequence SAHKARKSRSRSSSRSRS. Positions 486–495 are enriched in basic and acidic residues; it reads RSRERSDHSG. The segment covering 496 to 511 has biased composition (basic residues); that stretch reads KYKKKSHYYRNHRHER. Over residues 512-528 the composition is skewed to basic and acidic residues; that stretch reads SRSYERASHRYDRDHPG.

The protein belongs to the cyclin family. Cyclin L subfamily.

The protein resides in the nucleus speckle. The protein localises to the nucleus. It is found in the nucleoplasm. In terms of biological role, involved in pre-mRNA splicing. The protein is Cyclin-L1 (CCNL1) of Gallus gallus (Chicken).